We begin with the raw amino-acid sequence, 229 residues long: 2-C-methyl-D-erythritol 4-phosphate cytidylyltransferase (229 aa).

This sequence belongs to the IspD/TarI cytidylyltransferase family. IspD subfamily.

It catalyses the reaction 2-C-methyl-D-erythritol 4-phosphate + CTP + H(+) = 4-CDP-2-C-methyl-D-erythritol + diphosphate. It functions in the pathway isoprenoid biosynthesis; isopentenyl diphosphate biosynthesis via DXP pathway; isopentenyl diphosphate from 1-deoxy-D-xylulose 5-phosphate: step 2/6. Catalyzes the formation of 4-diphosphocytidyl-2-C-methyl-D-erythritol from CTP and 2-C-methyl-D-erythritol 4-phosphate (MEP). This is 2-C-methyl-D-erythritol 4-phosphate cytidylyltransferase from Neisseria meningitidis serogroup C / serotype 2a (strain ATCC 700532 / DSM 15464 / FAM18).